A 374-amino-acid polypeptide reads, in one-letter code: Alanine racemase (374 aa).

K40 (proton acceptor; specific for D-alanine) is an active-site residue. N6-(pyridoxal phosphate)lysine is present on K40. Position 136 (R136) interacts with substrate. Y264 serves as the catalytic Proton acceptor; specific for L-alanine. Residue M311 participates in substrate binding.

The protein belongs to the alanine racemase family. Requires pyridoxal 5'-phosphate as cofactor.

It carries out the reaction L-alanine = D-alanine. It functions in the pathway amino-acid biosynthesis; D-alanine biosynthesis; D-alanine from L-alanine: step 1/1. Functionally, catalyzes the interconversion of L-alanine and D-alanine. May also act on other amino acids. This chain is Alanine racemase (alr), found in Pediococcus pentosaceus (strain ATCC 25745 / CCUG 21536 / LMG 10740 / 183-1w).